A 182-amino-acid chain; its full sequence is Oligoribonuclease (182 aa).

The Exonuclease domain maps to Leu-8–Leu-171. Residue Tyr-129 is part of the active site.

The protein belongs to the oligoribonuclease family.

The protein localises to the cytoplasm. Functionally, 3'-to-5' exoribonuclease specific for small oligoribonucleotides. The polypeptide is Oligoribonuclease (Azoarcus sp. (strain BH72)).